Reading from the N-terminus, the 788-residue chain is Protein kintoun (788 aa).

Disordered regions lie at residues 194-249 (LRKP…SEQD), 415-438 (NNSEGLTSESNLDTGAPYLPEISP), and 628-754 (HKEH…SSSV). Residues 225–241 (GKEKKDQKRVIKEEHKQ) are compositionally biased toward basic and acidic residues. The segment covering 417-427 (SEGLTSESNLD) has biased composition (polar residues). 2 stretches are compositionally biased toward basic and acidic residues: residues 628–644 (HKEHCTDHSEHERDVGV) and 667–682 (ENTELDRDHTSERYEE). Polar residues-rich tracts occupy residues 685–701 (STSCTGESTSDQQQKDS) and 744–754 (NFDSRPASSSV).

Belongs to the PIH1 family. Kintoun subfamily.

Its subcellular location is the cytoplasm. The protein localises to the dynein axonemal particle. Functionally, required for cytoplasmic pre-assembly of axonemal dyneins, thereby playing a central role in motility in cilia and flagella. Involved in pre-assembly of dynein arm complexes in the cytoplasm before intraflagellar transport loads them for the ciliary compartment. This is Protein kintoun from Xenopus laevis (African clawed frog).